Here is a 352-residue protein sequence, read N- to C-terminus: Glutamine synthetase (352 aa).

The 80-residue stretch at 3 to 82 folds into the GS beta-grasp domain; sequence YQAEYIWIDG…LCEVQLTDFT (80 aa). In terms of domain architecture, GS catalytic spans 87-352; that stretch reads TRAAALGVAE…TTPAPAEASV (266 aa). Mg(2+) is bound by residues E108 and E110. Residue E164 coordinates ATP. Mg(2+) is bound by residues E169 and E176. E272 is an L-glutamate binding site.

This sequence belongs to the glutamine synthetase family. As to quaternary structure, homooctamer and homotetramer. Mg(2+) is required as a cofactor.

The protein localises to the cytoplasm. It carries out the reaction L-glutamate + NH4(+) + ATP = L-glutamine + ADP + phosphate + H(+). Functionally, catalyzes the ATP-dependent biosynthesis of glutamine from glutamate and ammonia. The chain is Glutamine synthetase from Frankia alni.